The chain runs to 304 residues: Secreted mono- and diacylglycerol lipase MDL2 (304 aa).

Residues 1 to 19 (MILGRTISLFLGCSALVSG) form the signal peptide. The cysteines at positions 55 and 297 are disulfide-linked. Residues asparagine 102 and asparagine 161 are each glycosylated (N-linked (GlcNAc...) asparagine). The active-site Nucleophile is the serine 171. Aspartate 228 is an active-site residue. N-linked (GlcNAc...) asparagine glycosylation is present at asparagine 253. Residue histidine 281 is part of the active site.

It belongs to the AB hydrolase superfamily. Lipase family. Class 3 subfamily.

It is found in the secreted. Its subcellular location is the cell wall. It catalyses the reaction a monoacylglycerol + H2O = glycerol + a fatty acid + H(+). It carries out the reaction a diacylglycerol + H2O = a monoacylglycerol + a fatty acid + H(+). Its function is as follows. Secreted lipase involved in Dandruff and seborrheic dermatitis (D/SD) probably via lipase-mediated breakdown of sebaceous lipids and release of irritating free fatty acids. Shows activity against monoglyceride and diglyceride substrates, but not triglyceride substrates and does not exhibit regio-selective production of diacylglycerols. Hydrolyzes both 1,2- and 1,3-diacylglycerols. Also hydrolyzes distearin, dilinolein and dipalmitolein. Cleaves oleic acid from 1,2 isomers of diolein on both the 1 and the 2 position of the glycerol backbone, resulting mainly in free fatty acids but no monoolein is detected. Shows activity on monoolein and liberates mostly free fatty acids, but can also perform the reverse reaction and produce diolein. This chain is Secreted mono- and diacylglycerol lipase MDL2, found in Malassezia globosa (strain ATCC MYA-4612 / CBS 7966) (Dandruff-associated fungus).